The following is a 347-amino-acid chain: NADH-ubiquinone oxidoreductase chain 2 (347 aa).

The next 10 helical transmembrane spans lie at 13–33 (IFAG…WVGL), 55–75 (AAIK…MAIL), 96–116 (LMIM…FWVP), 123–143 (PLMS…SIMY), 149–169 (LNVN…SWGG), 178–198 (ILAY…PYNP), 201–221 (TILN…LLNL), 247–267 (TLLS…WVII), 274–294 (NSLI…YFYL), and 326–346 (LPTL…MLMI).

The protein belongs to the complex I subunit 2 family. As to quaternary structure, core subunit of respiratory chain NADH dehydrogenase (Complex I) which is composed of 45 different subunits. Interacts with TMEM242.

Its subcellular location is the mitochondrion inner membrane. The catalysed reaction is a ubiquinone + NADH + 5 H(+)(in) = a ubiquinol + NAD(+) + 4 H(+)(out). Its function is as follows. Core subunit of the mitochondrial membrane respiratory chain NADH dehydrogenase (Complex I) which catalyzes electron transfer from NADH through the respiratory chain, using ubiquinone as an electron acceptor. Essential for the catalytic activity and assembly of complex I. This Pan paniscus (Pygmy chimpanzee) protein is NADH-ubiquinone oxidoreductase chain 2.